A 477-amino-acid polypeptide reads, in one-letter code: Oxidative stress-induced growth inhibitor 1 (477 aa).

Phosphoserine is present on Ser12.

The protein belongs to the OKL38 family. NADPH is required as a cofactor. As to expression, ubiquitous. Highest expression in the ovary, testis, kidney, skeletal muscle and liver.

The protein resides in the midbody. Its function is as follows. Monooxygenase catalytic activity. Involved in regulation of cytokinesis; promotes RHOA activity, probably acting locally at the midbody in late cytokinesis. Monooxygenase activity is involved in stabilizing transient structures between daughter cells, termed intercellular bridges, before abscission. Regulates differentiation and proliferation through the regulation of cell death. This Homo sapiens (Human) protein is Oxidative stress-induced growth inhibitor 1.